A 37-amino-acid chain; its full sequence is Large ribosomal subunit protein bL36 (37 aa).

The protein belongs to the bacterial ribosomal protein bL36 family.

The polypeptide is Large ribosomal subunit protein bL36 (Brevibacillus brevis (strain 47 / JCM 6285 / NBRC 100599)).